We begin with the raw amino-acid sequence, 373 residues long: D-alanine--D-alanine ligase A (373 aa).

One can recognise an ATP-grasp domain in the interval 146–355 (KRLAEFAGIP…YGELLSRLVD (210 aa)). 179–234 (VEGLSLPVFVKPCNMGSSVGIHKVKTQDALEAALDDAFRYDVKVLVQQGIDAREIE) contacts ATP. Mg(2+) contacts are provided by Asp-308, Glu-322, and Asn-324.

The protein belongs to the D-alanine--D-alanine ligase family. Requires Mg(2+) as cofactor. Mn(2+) is required as a cofactor.

It is found in the cytoplasm. It carries out the reaction 2 D-alanine + ATP = D-alanyl-D-alanine + ADP + phosphate + H(+). Its pathway is cell wall biogenesis; peptidoglycan biosynthesis. In terms of biological role, cell wall formation. The protein is D-alanine--D-alanine ligase A of Bradyrhizobium diazoefficiens (strain JCM 10833 / BCRC 13528 / IAM 13628 / NBRC 14792 / USDA 110).